Consider the following 191-residue polypeptide: Probable calcium-binding protein CML8 (191 aa).

The tract at residues 1–41 is disordered; sequence MASKYRGYYHDEASSAAGGGGGGGGGDGYRREKQVRKKRLT. The segment covering 17 to 27 has biased composition (gly residues); sequence AGGGGGGGGGD. EF-hand domains follow at residues 43–78, 79–114, 116–151, and 152–187; these read QKRK…LGFE, MTPE…KMGE, DARE…TGEP, and FTLD…IGFG. Ca(2+) is bound by residues Asp-56, Asp-58, Ser-60, Thr-62, Glu-67, Asp-92, Asp-94, Ser-96, Thr-98, Glu-103, Asp-129, Asp-131, Asn-133, Lys-135, Asp-140, Asp-165, Asn-167, Asp-169, Glu-171, and Glu-176.

Functionally, potential calcium sensor. The chain is Probable calcium-binding protein CML8 (CML8) from Oryza sativa subsp. japonica (Rice).